Consider the following 221-residue polypeptide: Translation initiation factor 6 (221 aa).

Belongs to the eIF-6 family.

Functionally, binds to the 50S ribosomal subunit and prevents its association with the 30S ribosomal subunit to form the 70S initiation complex. This is Translation initiation factor 6 from Methanopyrus kandleri (strain AV19 / DSM 6324 / JCM 9639 / NBRC 100938).